The chain runs to 104 residues: Large ribosomal subunit protein uL24 (104 aa).

The protein belongs to the universal ribosomal protein uL24 family. As to quaternary structure, part of the 50S ribosomal subunit.

In terms of biological role, one of two assembly initiator proteins, it binds directly to the 5'-end of the 23S rRNA, where it nucleates assembly of the 50S subunit. Functionally, one of the proteins that surrounds the polypeptide exit tunnel on the outside of the subunit. This chain is Large ribosomal subunit protein uL24, found in Clostridium beijerinckii (strain ATCC 51743 / NCIMB 8052) (Clostridium acetobutylicum).